Consider the following 496-residue polypeptide: Gamma-aminobutyric acid receptor subunit beta-like (496 aa).

The segment at residues 1–20 (MTCFTRVGVSCGLFFFLLGA) is a signal peptide (or 27). The Extracellular portion of the chain corresponds to 21–258 (QLQLIRCIRK…SFKLQRNIGY (238 aa)). 2 N-linked (GlcNAc...) asparagine glycosylation sites follow: asparagine 39 and asparagine 189. The cysteines at positions 176 and 190 are disulfide-linked. Transmembrane regions (helical) follow at residues 259 to 280 (FVFQ…SFWI), 285 to 306 (TSAR…STGV), and 318 to 342 (AIDI…AVNY). Topologically, residues 343–472 (TYWGKRAKKK…KIKDVNIIDK (130 aa)) are cytoplasmic. The chain crosses the membrane as a helical span at residues 473–494 (YSRMIFPISFLAFNLGYWLFYI).

This sequence belongs to the ligand-gated ion channel (TC 1.A.9) family. Gamma-aminobutyric acid receptor (TC 1.A.9.5) subfamily. In terms of assembly, generally pentameric. There are five types of GABA(A) receptor chains: alpha, beta, gamma, delta, and rho. Interacts with Grd (alpha chain).

Its subcellular location is the postsynaptic cell membrane. It localises to the cell membrane. GABA, an inhibitory neurotransmitter, mediates neuronal inhibition by binding to the GABA receptor and opening an integral chloride channel. Combines with the ligand-gated ion channel subunit GRD to form cation-selective GABA-gated ion channels when coexpressed in Xenopus laevis oocytes. In Drosophila melanogaster (Fruit fly), this protein is Gamma-aminobutyric acid receptor subunit beta-like (Lcch3).